The following is a 224-amino-acid chain: Triosephosphate isomerase (224 aa).

9 to 11 (NFK) contributes to the substrate binding site. The active-site Electrophile is H93. E141 functions as the Proton acceptor in the catalytic mechanism. Substrate contacts are provided by residues I146, G181, and 202–203 (AS).

Belongs to the triosephosphate isomerase family. Homotetramer; dimer of dimers.

Its subcellular location is the cytoplasm. The catalysed reaction is D-glyceraldehyde 3-phosphate = dihydroxyacetone phosphate. Its pathway is carbohydrate biosynthesis; gluconeogenesis. The protein operates within carbohydrate degradation; glycolysis; D-glyceraldehyde 3-phosphate from glycerone phosphate: step 1/1. Functionally, involved in the gluconeogenesis. Catalyzes stereospecifically the conversion of dihydroxyacetone phosphate (DHAP) to D-glyceraldehyde-3-phosphate (G3P). The sequence is that of Triosephosphate isomerase from Pyrobaculum arsenaticum (strain DSM 13514 / JCM 11321 / PZ6).